Here is a 257-residue protein sequence, read N- to C-terminus: Putative hydro-lyase Bamb_5282 (257 aa).

Belongs to the D-glutamate cyclase family.

This Burkholderia ambifaria (strain ATCC BAA-244 / DSM 16087 / CCUG 44356 / LMG 19182 / AMMD) (Burkholderia cepacia (strain AMMD)) protein is Putative hydro-lyase Bamb_5282.